We begin with the raw amino-acid sequence, 408 residues long: Probable E3 ubiquitin-protein ligase makorin-1 (408 aa).

2 C3H1-type zinc fingers span residues 34-61 and 63-90; these read WTRHVTCRYFIHGVCKEGINCRYSHDLA and SRSAMICRYFQRGCCAYGDRCRYEHNKP. Disordered stretches follow at residues 90–114 and 154–173; these read PLQEDPTGDTCTAPSESLPEPSGNI and EAYTQGTVKPDEGREEPADP. Over residues 162–173 the composition is skewed to basic and acidic residues; it reads KPDEGREEPADP. The C3H1-type 3 zinc finger occupies 174-201; sequence ELKKQLCPYAAMGECRYGENCVYLHGDP. The tract at residues 202–229 is makorin-type Cys-His; sequence CDMCGLQVLHPVDTCQRSQHIKSCIEAH. The segment at 247 to 301 adopts an RING-type zinc-finger fold; that stretch reads CGICMEVVYEKTNPSERRFGILSNCSHSYCLKCIRKWRSAKQFESKIIKSCPECR. The C3H1-type 4 zinc-finger motif lies at 330–359; sequence AMSSKSCRYFDEGRGTCPFGGNCFYRHAYP. The segment at 363–408 is disordered; sequence IEEPQPRQKSGMSSRYRIPSPSAGIDFGSLTSERAETRLRTRKTKL.

The enzyme catalyses S-ubiquitinyl-[E2 ubiquitin-conjugating enzyme]-L-cysteine + [acceptor protein]-L-lysine = [E2 ubiquitin-conjugating enzyme]-L-cysteine + N(6)-ubiquitinyl-[acceptor protein]-L-lysine.. It participates in protein modification; protein ubiquitination. Functionally, E3 ubiquitin ligase catalyzing the covalent attachment of ubiquitin moieties onto substrate proteins. This is Probable E3 ubiquitin-protein ligase makorin-1 (mkrn1) from Xenopus laevis (African clawed frog).